A 417-amino-acid chain; its full sequence is Actin-related protein 10 (417 aa).

The protein belongs to the actin family. Subunit of dynactin, a multiprotein complex part of a tripartite complex with dynein and a adapter, such as BICDL1, BICD2 or HOOK3. The dynactin complex is built around ACTR1A/ACTB filament and consists of an actin-related filament composed of a shoulder domain, a pointed end and a barbed end. Its length is defined by its flexible shoulder domain. The soulder is composed of 2 DCTN1 subunits, 4 DCTN2 and 2 DCTN3. The 4 DCNT2 (via N-terminus) bind the ACTR1A filament and act as molecular rulers to determine the length. The pointed end is important for binding dynein-dynactin cargo adapters. Consists of 4 subunits: ACTR10, DCNT4, DCTN5 and DCTN6. The barbed end is composed of a CAPZA1:CAPZB heterodimers, which binds ACTR1A/ACTB filament and dynactin and stabilizes dynactin.

Its subcellular location is the cytoplasm. It is found in the cytoskeleton. Its function is as follows. Part of the dynactin complex that activates the molecular motor dynein for ultra-processive transport along microtubules. The polypeptide is Actin-related protein 10 (ACTR10) (Homo sapiens (Human)).